Here is a 278-residue protein sequence, read N- to C-terminus: Troponin T, slow skeletal muscle (278 aa).

Over residues 1–37 the composition is skewed to acidic residues; the sequence is MSDTEEQEYEEEQPEEEAAEEEEEAPEEPEPVAEPEE. Disordered regions lie at residues 1–63 and 105–153; these read MSDT…RVDF and RRRS…KKKV. Residue serine 2 is modified to Phosphoserine; by CK2. A compositionally biased stretch (pro residues) spans 43–55; that stretch reads SRPVVPPLIPPKI. Positions 105-149 are enriched in basic and acidic residues; that stretch reads RRRSERAEQQRFRTEKERERQAKLAEEKMRKEEEEAKKRAEDDAK.

It belongs to the troponin T family. Interacts with TPM3.

Its function is as follows. Troponin T is the tropomyosin-binding subunit of troponin, the thin filament regulatory complex which confers calcium-sensitivity to striated muscle actomyosin ATPase activity. The polypeptide is Troponin T, slow skeletal muscle (TNNT1) (Homo sapiens (Human)).